The primary structure comprises 500 residues: Kynurenine 3-monooxygenase (500 aa).

Belongs to the aromatic-ring hydroxylase family. KMO subfamily. FAD serves as cofactor.

Its subcellular location is the mitochondrion outer membrane. It catalyses the reaction L-kynurenine + NADPH + O2 + H(+) = 3-hydroxy-L-kynurenine + NADP(+) + H2O. It functions in the pathway cofactor biosynthesis; NAD(+) biosynthesis; quinolinate from L-kynurenine: step 1/3. Its function is as follows. Catalyzes the hydroxylation of L-kynurenine (L-Kyn) to form 3-hydroxy-L-kynurenine (L-3OHKyn). Required for synthesis of quinolinic acid. The chain is Kynurenine 3-monooxygenase (bna4) from Aspergillus terreus (strain NIH 2624 / FGSC A1156).